The sequence spans 447 residues: tRNA-2-methylthio-N(6)-dimethylallyladenosine synthase (447 aa).

In terms of domain architecture, MTTase N-terminal spans lysine 14–glutamine 130. Residues cysteine 23, cysteine 59, cysteine 93, cysteine 166, cysteine 170, and cysteine 173 each contribute to the [4Fe-4S] cluster site. The Radical SAM core domain occupies arginine 152 to glutamate 382. In terms of domain architecture, TRAM spans alanine 385–alanine 447.

This sequence belongs to the methylthiotransferase family. MiaB subfamily. As to quaternary structure, monomer. [4Fe-4S] cluster is required as a cofactor.

It localises to the cytoplasm. The enzyme catalyses N(6)-dimethylallyladenosine(37) in tRNA + (sulfur carrier)-SH + AH2 + 2 S-adenosyl-L-methionine = 2-methylsulfanyl-N(6)-dimethylallyladenosine(37) in tRNA + (sulfur carrier)-H + 5'-deoxyadenosine + L-methionine + A + S-adenosyl-L-homocysteine + 2 H(+). Its function is as follows. Catalyzes the methylthiolation of N6-(dimethylallyl)adenosine (i(6)A), leading to the formation of 2-methylthio-N6-(dimethylallyl)adenosine (ms(2)i(6)A) at position 37 in tRNAs that read codons beginning with uridine. This Chlorobium phaeobacteroides (strain BS1) protein is tRNA-2-methylthio-N(6)-dimethylallyladenosine synthase.